We begin with the raw amino-acid sequence, 193 residues long: Holliday junction branch migration complex subunit RuvA (193 aa).

A domain I region spans residues 1–64 (MIGRIAGTLI…EDAHLLYGFG (64 aa)). Positions 65 to 143 (TAAERETFRQ…ADLGTVPGGP (79 aa)) are domain II. A flexible linker region spans residues 144–151 (AVSDDAVD). A domain III region spans residues 151-193 (DVLNALLALGYSDKEAALAIKQVPAGTGVSEGIKLALKALSKG).

This sequence belongs to the RuvA family. As to quaternary structure, homotetramer. Forms an RuvA(8)-RuvB(12)-Holliday junction (HJ) complex. HJ DNA is sandwiched between 2 RuvA tetramers; dsDNA enters through RuvA and exits via RuvB. An RuvB hexamer assembles on each DNA strand where it exits the tetramer. Each RuvB hexamer is contacted by two RuvA subunits (via domain III) on 2 adjacent RuvB subunits; this complex drives branch migration. In the full resolvosome a probable DNA-RuvA(4)-RuvB(12)-RuvC(2) complex forms which resolves the HJ.

The protein resides in the cytoplasm. Functionally, the RuvA-RuvB-RuvC complex processes Holliday junction (HJ) DNA during genetic recombination and DNA repair, while the RuvA-RuvB complex plays an important role in the rescue of blocked DNA replication forks via replication fork reversal (RFR). RuvA specifically binds to HJ cruciform DNA, conferring on it an open structure. The RuvB hexamer acts as an ATP-dependent pump, pulling dsDNA into and through the RuvAB complex. HJ branch migration allows RuvC to scan DNA until it finds its consensus sequence, where it cleaves and resolves the cruciform DNA. The polypeptide is Holliday junction branch migration complex subunit RuvA (Ralstonia pickettii (strain 12J)).